The chain runs to 213 residues: Large ribosomal subunit protein uL3 (213 aa).

Residues 122–147 (AIKRHGQSRGPMAHGSRYHRRPGSMG) form a disordered region.

It belongs to the universal ribosomal protein uL3 family. Part of the 50S ribosomal subunit. Forms a cluster with proteins L14 and L19.

One of the primary rRNA binding proteins, it binds directly near the 3'-end of the 23S rRNA, where it nucleates assembly of the 50S subunit. The polypeptide is Large ribosomal subunit protein uL3 (Geobacillus stearothermophilus (Bacillus stearothermophilus)).